Reading from the N-terminus, the 190-residue chain is Dynein axonemal light chain 1 (190 aa).

LRR repeat units follow at residues 49–70, 71–92, 94–115, and 116–137; these read VCEKLSLSTNCIEKIANLNGLK, NLKILSLGRNNIKNLNGLEAVG, SLEELWISYNSIEKLKGIHVLK, and KLKVLLMSNNQVKDWGEFNKLQ. An LRRCT domain is found at 150–190; the sequence is NPLEEKHSAEGDWQDRVTKSLKALKKLDGTPIIKNDEEEED.

This sequence belongs to the dynein light chain LC1-type family. Interacts with DNAH5, a outer arm dynein heavy chain. Interacts with tubulin located within the A-tubule of the outer doublets in a ATP-independent manner.

The protein resides in the cytoplasm. It is found in the cytoskeleton. The protein localises to the cilium axoneme. Part of the multisubunit axonemal ATPase complexes that generate the force for cilia motility and govern beat frequency. Component of the outer arm dynein (ODA). May be involved in a mechanosensory feedback mechanism controlling ODA activity based on external conformational cues by tethering the outer arm dynein heavy chain (DNAH5) to the microtubule within the axoneme. This Ciona intestinalis (Transparent sea squirt) protein is Dynein axonemal light chain 1 (DNAL1).